Here is a 475-residue protein sequence, read N- to C-terminus: Sulfate adenylyltransferase subunit 1 (475 aa).

The tr-type G domain maps to 25–239 (KSLLRFLTCG…EVLETVEIQR (215 aa)). The segment at 34–41 (GSVDDGKS) is G1. 34-41 (GSVDDGKS) serves as a coordination point for GTP. The interval 92–96 (GITID) is G2. Residues 113 to 116 (DTPG) form a G3 region. Residues 113–117 (DTPGH) and 168–171 (NKMD) contribute to the GTP site. Residues 168 to 171 (NKMD) are G4. The G5 stretch occupies residues 206–208 (SAL).

The protein belongs to the TRAFAC class translation factor GTPase superfamily. Classic translation factor GTPase family. CysN/NodQ subfamily. As to quaternary structure, heterodimer composed of CysD, the smaller subunit, and CysN.

The catalysed reaction is sulfate + ATP + H(+) = adenosine 5'-phosphosulfate + diphosphate. Its pathway is sulfur metabolism; hydrogen sulfide biosynthesis; sulfite from sulfate: step 1/3. In terms of biological role, with CysD forms the ATP sulfurylase (ATPS) that catalyzes the adenylation of sulfate producing adenosine 5'-phosphosulfate (APS) and diphosphate, the first enzymatic step in sulfur assimilation pathway. APS synthesis involves the formation of a high-energy phosphoric-sulfuric acid anhydride bond driven by GTP hydrolysis by CysN coupled to ATP hydrolysis by CysD. The protein is Sulfate adenylyltransferase subunit 1 of Escherichia coli O9:H4 (strain HS).